An 831-amino-acid chain; its full sequence is Probable DNA-directed RNA polymerase (831 aa).

Residues D490, K560, and D738 contribute to the active site.

This sequence belongs to the phage and mitochondrial RNA polymerase family.

The protein localises to the mitochondrion. It catalyses the reaction RNA(n) + a ribonucleoside 5'-triphosphate = RNA(n+1) + diphosphate. In terms of biological role, DNA-dependent RNA polymerase catalyzes the transcription of DNA into RNA using the four ribonucleoside triphosphates as substrates. In Gelasinospora sp. (strain G114), this protein is Probable DNA-directed RNA polymerase.